Consider the following 172-residue polypeptide: Large ribosomal subunit protein uL10 (172 aa).

The protein belongs to the universal ribosomal protein uL10 family. As to quaternary structure, part of the ribosomal stalk of the 50S ribosomal subunit. The N-terminus interacts with L11 and the large rRNA to form the base of the stalk. The C-terminus forms an elongated spine to which L12 dimers bind in a sequential fashion forming a multimeric L10(L12)X complex.

In terms of biological role, forms part of the ribosomal stalk, playing a central role in the interaction of the ribosome with GTP-bound translation factors. The polypeptide is Large ribosomal subunit protein uL10 (Rhodopseudomonas palustris (strain BisB5)).